Consider the following 257-residue polypeptide: Inositol diphosphatase DSP2 (257 aa).

Residues 66–251 (NFSMVDNGIF…VSGLKHTPMS (186 aa)) form the Tyrosine-protein phosphatase domain. Residues isoleucine 168 and lysine 172 each coordinate 1D-myo-inositol hexakisphosphate. Cysteine 192 functions as the Phosphocysteine intermediate in the catalytic mechanism.

This sequence belongs to the protein-tyrosine phosphatase family. Atypical dual-specificity phosphatase Siw14-like subfamily. In terms of tissue distribution, expressed in roots, leaves, stems, flowers and siliques.

The enzyme catalyses 5-diphospho-1D-myo-inositol 1,2,3,4,6-pentakisphosphate + H2O = 1D-myo-inositol hexakisphosphate + phosphate + H(+). It catalyses the reaction 1,5-bis(diphospho)-1D-myo-inositol 2,3,4,6-tetrakisphosphate + H2O = 1-diphospho-1D-myo-inositol 2,3,4,5,6-pentakisphosphate + phosphate + 2 H(+). It carries out the reaction 3,5-bis(diphospho)-1D-myo-inositol 1,2,4,6-tetrakisphosphate + H2O = 3-diphospho-1D-myo-inositol 1,2,4,5,6-pentakisphosphate + phosphate + 2 H(+). The catalysed reaction is 6-diphospho-1D-myo-inositol pentakisphosphate + H2O = 1D-myo-inositol hexakisphosphate + phosphate + H(+). Functionally, cleaves the beta-phosphate at the 5-position of soluble inositol pyrophosphates. Has highest activity on 5-diphosphoinositol 1,2,3,4,6-pentakisphosphate (5-InsP(7)), 1,5-bis-diphosphoinositol 2,3,4,6-tetrakisphosphate (1,5-InsP(8)) and 3,5-InsP(8). Possesses phosphotyrosine phosphatase activity in vitro. Dephosphorylates the phosphoinositides PI(3,5)P2. Hydrolyzes para-nitrophenyl phosphate and O-methylfluorescein phosphate in vitro. This is Inositol diphosphatase DSP2 from Arabidopsis thaliana (Mouse-ear cress).